Here is a 359-residue protein sequence, read N- to C-terminus: 2-epi-5-epi-valiolone 7-kinase (359 aa).

The disordered stretch occupies residues 28–48; it reads GGLGEVHTTPSPGHARRPGAG.

The protein belongs to the ROK (NagC/XylR) family.

It catalyses the reaction 2-epi-5-epi-valiolone + ATP = 2-epi-5-epi-valiolone 7-phosphate + ADP + H(+). In terms of biological role, catalyzes the conversion of 2-epi-5-epi-valiolone to 2-epi-5-epi-valiolone 7-phosphate. Involved in the biosynthesis of the acarviose moiety of the alpha-glucosidase inhibitor acarbose. This Actinoplanes sp. (strain ATCC 31044 / CBS 674.73 / SE50/110) protein is 2-epi-5-epi-valiolone 7-kinase.